Reading from the N-terminus, the 429-residue chain is 3-oxo-tetronate kinase (429 aa).

Residues serine 268, glycine 366–threonine 369, and glycine 410 contribute to the ATP site.

Belongs to the four-carbon acid sugar kinase family.

It catalyses the reaction 3-dehydro-L-erythronate + ATP = 3-dehydro-4-O-phospho-L-erythronate + ADP + H(+). The enzyme catalyses 3-dehydro-D-erythronate + ATP = 3-dehydro-4-O-phospho-D-erythronate + ADP + H(+). Its function is as follows. Catalyzes the ATP-dependent phosphorylation of 3-oxo-tetronate to 3-oxo-tetronate 4-phosphate. The chain is 3-oxo-tetronate kinase from Pseudomonas savastanoi pv. phaseolicola (strain 1448A / Race 6) (Pseudomonas syringae pv. phaseolicola (strain 1448A / Race 6)).